We begin with the raw amino-acid sequence, 901 residues long: HTH-type transcriptional regulator MalT (901 aa).

39–46 (SPAGYGKT) provides a ligand contact to ATP. Residues 829 to 894 (ELIRTSPLTQ…AAVQHAQKLL (66 aa)) form the HTH luxR-type domain. The segment at residues 853–872 (NEQIAGELEVAATTIKTHIR) is a DNA-binding region (H-T-H motif).

This sequence belongs to the MalT family. Monomer in solution. Oligomerizes to an active state in the presence of the positive effectors ATP and maltotriose.

Its activity is regulated as follows. Activated by ATP and maltotriose, which are both required for DNA binding. Its function is as follows. Positively regulates the transcription of the maltose regulon whose gene products are responsible for uptake and catabolism of malto-oligosaccharides. Specifically binds to the promoter region of its target genes, recognizing a short DNA motif called the MalT box. The chain is HTH-type transcriptional regulator MalT from Escherichia coli (strain 55989 / EAEC).